The sequence spans 180 residues: UPF0340 protein LACR_0494 (180 aa).

Belongs to the UPF0340 family.

The sequence is that of UPF0340 protein LACR_0494 from Lactococcus lactis subsp. cremoris (strain SK11).